A 1369-amino-acid chain; its full sequence is MTSSSPKTRKSSTKSKAKRGSKSKKAAEIIAVQRLSKTPPPFRNKVVDKKVLKNLVAWAFKHHGTAATAAMADNLKDLGFRYATQAAVSISVDDLKVPEAKQDLLGQAEELITATEECYRLGEITEVERHTKVIDTWTETNERLVDAVKKNFNQNDPLNSVWMMANSGARGNMSQVRQLVGMRGLMANPQGEIIDLPIRTNFREGLTVTEYVISSYGARKGLVDTALRTADSGYLTRRLVDVAQDVIVREEDCGTTRSILISAEDGKFGNRLVGRLTSEQVVNADEEVLAERDTPIDPQLSKKFEQSNMQGVRVRSPLTCEATRSVCRKCYGWALAHNQLVDLGEAVGIVAAQSIGEPGTQLTMRTFHTGGVSTAETGVVRSTLSGKVEFGSKARVRGYRTPHGVEAQQAEVDFNLSIVPTSGGKPQKIDIPIGSLLFVDNGQNIDIDVTVAQIASGTVQKSVEKATKDVICDLAGQVRYETIIQPREVTDRQGNITLKAQRLGRLWVLAGDVYNLPPNALPVVSGNVSVKEGQVLAEASQASEFGGEVRLRDSIGDSREVQIVTTSMTLDDFKLLEESTHSGEIWHLEAQDNTRYRLNTIPGSKIGNNEVIAELSDDRFKTETGGLIKYAPGLTIKKARSAKNGYEVSKGGTLLWIPQETHEINKDISLLMIKDRQWIEAGTEVVKDIFSQTAGIVTVTQKNDILREIIVRSGTFKLCKESKALDRFEGDGQIVNPGETIAKGIKTDSMVMVQSVETPEGKGLLLRSVEEFNIPDQAQLPELKHVKQPKGPSLGVKASQRLAYKDGELIKSVEGVELLKTQLMLETFDTTPQMTVDVEVIQDLNSKGDRLKLVILESILVRRDTTSDSSHGSTHTELQIENAQVVSAGDVVATTQILCKQEGVVQLPDAVDGDPVRRLIVEREEDTITIDSKGTTLLKVGQRVVDGDFVSKDQSIDACGEIENIDGKKVKLRLGRPYMVSPDSVLHVRDGDLVQRGDGLALLVFERQKTGDIVQGLPRIEELLEARRPRDSAILCKKSGTVDIKKGDDDDSVVVSIIEDNDVISEYPILLGRNVMVRNSQQVIAGEFLTDGPVNPHELLECFFTDLRDKKPLMDAAQEAIAKLQHRMVSEVQNVYKSQGVAIDDKHIEVIVRQMTSKVRIEDAGDTTFLPGELIELRQVEDTNQAISITGGAPSEFTPVLLGITKASLNTDSFISAASFQETTRVLTEAAIEGKSDWLRGLKENVIIGRLIPAGTGFSGFVEELNAEAGPHPDILAEDPAGYRRIQNLRPDYTVDMPSSPVAKNTAVLDDPSEEDLEATRSRHGIDPTTSNFAAFARPVGDDELSAEDQMPDPAALEGLQEEGLLSDE.

The disordered stretch occupies residues 1-26 (MTSSSPKTRKSSTKSKAKRGSKSKKA). Residues 7-24 (KTRKSSTKSKAKRGSKSK) show a composition bias toward basic residues. Residues cysteine 253, cysteine 320, cysteine 327, and cysteine 330 each coordinate Zn(2+). The segment at 1294–1369 (TVDMPSSPVA…LQEEGLLSDE (76 aa)) is disordered. Acidic residues predominate over residues 1342 to 1351 (DDELSAEDQM). Residues 1357–1369 (LEGLQEEGLLSDE) are compositionally biased toward low complexity.

Belongs to the RNA polymerase beta' chain family. RpoC2 subfamily. As to quaternary structure, in cyanobacteria the RNAP catalytic core is composed of 2 alpha, 1 beta, 1 beta', 1 gamma and 1 omega subunit. When a sigma factor is associated with the core the holoenzyme is formed, which can initiate transcription. It depends on Zn(2+) as a cofactor.

It catalyses the reaction RNA(n) + a ribonucleoside 5'-triphosphate = RNA(n+1) + diphosphate. Its function is as follows. DNA-dependent RNA polymerase catalyzes the transcription of DNA into RNA using the four ribonucleoside triphosphates as substrates. This Prochlorococcus marinus (strain NATL2A) protein is DNA-directed RNA polymerase subunit beta'.